The sequence spans 322 residues: Delta-aminolevulinic acid dehydratase (322 aa).

Zn(2+)-binding residues include cysteine 120, cysteine 122, and cysteine 130. The Schiff-base intermediate with substrate role is filled by lysine 195. Positions 205 and 217 each coordinate 5-aminolevulinate. Glutamate 233 is a Mg(2+) binding site. Lysine 248 serves as the catalytic Schiff-base intermediate with substrate. 5-aminolevulinate is bound by residues serine 274 and tyrosine 312.

Belongs to the ALAD family. Homooctamer. Requires Zn(2+) as cofactor.

The enzyme catalyses 2 5-aminolevulinate = porphobilinogen + 2 H2O + H(+). The protein operates within porphyrin-containing compound metabolism; protoporphyrin-IX biosynthesis; coproporphyrinogen-III from 5-aminolevulinate: step 1/4. In terms of biological role, catalyzes an early step in the biosynthesis of tetrapyrroles. Binds two molecules of 5-aminolevulinate per subunit, each at a distinct site, and catalyzes their condensation to form porphobilinogen. This is Delta-aminolevulinic acid dehydratase (hemB) from Archaeoglobus fulgidus (strain ATCC 49558 / DSM 4304 / JCM 9628 / NBRC 100126 / VC-16).